The chain runs to 427 residues: Serine--tRNA ligase (427 aa).

L-serine is bound at residue 231 to 233 (TAE). 262–264 (RSE) is a binding site for ATP. Glutamate 285 contacts L-serine. 349 to 352 (EISS) contacts ATP. Serine 385 is a binding site for L-serine.

The protein belongs to the class-II aminoacyl-tRNA synthetase family. Type-1 seryl-tRNA synthetase subfamily. As to quaternary structure, homodimer. The tRNA molecule binds across the dimer.

The protein resides in the cytoplasm. It carries out the reaction tRNA(Ser) + L-serine + ATP = L-seryl-tRNA(Ser) + AMP + diphosphate + H(+). It catalyses the reaction tRNA(Sec) + L-serine + ATP = L-seryl-tRNA(Sec) + AMP + diphosphate + H(+). The protein operates within aminoacyl-tRNA biosynthesis; selenocysteinyl-tRNA(Sec) biosynthesis; L-seryl-tRNA(Sec) from L-serine and tRNA(Sec): step 1/1. Functionally, catalyzes the attachment of serine to tRNA(Ser). Is also able to aminoacylate tRNA(Sec) with serine, to form the misacylated tRNA L-seryl-tRNA(Sec), which will be further converted into selenocysteinyl-tRNA(Sec). This Staphylococcus saprophyticus subsp. saprophyticus (strain ATCC 15305 / DSM 20229 / NCIMB 8711 / NCTC 7292 / S-41) protein is Serine--tRNA ligase.